Consider the following 449-residue polypeptide: UDP-N-acetylmuramoylalanine--D-glutamate ligase (449 aa).

An ATP-binding site is contributed by 119 to 125 (GTNGKTT).

The protein belongs to the MurCDEF family.

The protein localises to the cytoplasm. The enzyme catalyses UDP-N-acetyl-alpha-D-muramoyl-L-alanine + D-glutamate + ATP = UDP-N-acetyl-alpha-D-muramoyl-L-alanyl-D-glutamate + ADP + phosphate + H(+). The protein operates within cell wall biogenesis; peptidoglycan biosynthesis. Its function is as follows. Cell wall formation. Catalyzes the addition of glutamate to the nucleotide precursor UDP-N-acetylmuramoyl-L-alanine (UMA). This is UDP-N-acetylmuramoylalanine--D-glutamate ligase from Lactococcus lactis subsp. cremoris (strain MG1363).